The primary structure comprises 228 residues: Prolactin-2B1 (228 aa).

The N-terminal stretch at 1-31 (MLLSLTQMLSSRASSRLFLVSYLLLWENVVS) is a signal peptide. Disulfide bonds link cysteine 89-cysteine 194 and cysteine 203-cysteine 228.

The protein belongs to the somatotropin/prolactin family. In terms of tissue distribution, expressed specifically in placenta. Expressed at high levels in trophoblast cells from both junctional and labyrinth zones of the chorioallantoic placenta the last week of gestation.

Its subcellular location is the secreted. The chain is Prolactin-2B1 (Prl2b1) from Mus musculus (Mouse).